The following is a 126-amino-acid chain: Urease subunit beta (126 aa).

This sequence belongs to the urease beta subunit family. In terms of assembly, heterotrimer of UreA (gamma), UreB (beta) and UreC (alpha) subunits. Three heterotrimers associate to form the active enzyme.

The protein localises to the cytoplasm. It carries out the reaction urea + 2 H2O + H(+) = hydrogencarbonate + 2 NH4(+). It participates in nitrogen metabolism; urea degradation; CO(2) and NH(3) from urea (urease route): step 1/1. The protein is Urease subunit beta of Sporosarcina pasteurii (Bacillus pasteurii).